The following is a 328-amino-acid chain: Tetraacyldisaccharide 4'-kinase (328 aa).

Threonine 55–threonine 62 is an ATP binding site.

Belongs to the LpxK family.

The enzyme catalyses a lipid A disaccharide + ATP = a lipid IVA + ADP + H(+). The protein operates within glycolipid biosynthesis; lipid IV(A) biosynthesis; lipid IV(A) from (3R)-3-hydroxytetradecanoyl-[acyl-carrier-protein] and UDP-N-acetyl-alpha-D-glucosamine: step 6/6. Functionally, transfers the gamma-phosphate of ATP to the 4'-position of a tetraacyldisaccharide 1-phosphate intermediate (termed DS-1-P) to form tetraacyldisaccharide 1,4'-bis-phosphate (lipid IVA). The protein is Tetraacyldisaccharide 4'-kinase of Shigella dysenteriae serotype 1 (strain Sd197).